The following is a 457-amino-acid chain: Amidophosphoribosyltransferase (457 aa).

Cys2 serves as the catalytic Nucleophile. Residues 2–223 (CGVVGIYHPD…PGKAAIIKDG (222 aa)) enclose the Glutamine amidotransferase type-2 domain. Residue Cys239 participates in [4Fe-4S] cluster binding. Mg(2+) contacts are provided by Ser286, Asp348, and Asp349. Cys385, Cys438, and Cys441 together coordinate [4Fe-4S] cluster.

This sequence in the C-terminal section; belongs to the purine/pyrimidine phosphoribosyltransferase family. Mg(2+) serves as cofactor. Requires [4Fe-4S] cluster as cofactor.

The catalysed reaction is 5-phospho-beta-D-ribosylamine + L-glutamate + diphosphate = 5-phospho-alpha-D-ribose 1-diphosphate + L-glutamine + H2O. Its pathway is purine metabolism; IMP biosynthesis via de novo pathway; N(1)-(5-phospho-D-ribosyl)glycinamide from 5-phospho-alpha-D-ribose 1-diphosphate: step 1/2. In terms of biological role, catalyzes the formation of phosphoribosylamine from phosphoribosylpyrophosphate (PRPP) and glutamine. The protein is Amidophosphoribosyltransferase of Archaeoglobus fulgidus (strain ATCC 49558 / DSM 4304 / JCM 9628 / NBRC 100126 / VC-16).